Consider the following 344-residue polypeptide: MAP3K12-binding inhibitory protein 1 (344 aa).

The residue at position 91 (Ser91) is a Phosphoserine. Glycyl lysine isopeptide (Lys-Gly) (interchain with G-Cter in SUMO2) cross-links involve residues Lys94, Lys118, Lys129, Lys139, Lys153, and Lys235. The tract at residues 172 to 344 is interaction with MAP3K12; it reads AEINENNVRE…AESMATHHLP (173 aa). Positions 271–285 are leucine-zipper 1; it reads IYQRIKKLEDKILEL. Lys301 bears the N6-acetyllysine; alternate mark. Lys301 is covalently cross-linked (Glycyl lysine isopeptide (Lys-Gly) (interchain with G-Cter in SUMO2); alternate). Glycyl lysine isopeptide (Lys-Gly) (interchain with G-Cter in SUMO2) cross-links involve residues Lys304 and Lys325. The tract at residues 314–329 is leucine-zipper 2; that stretch reads LAELDEKISALKQALL.

In terms of assembly, component of the ADA2A-containing complex (ATAC), composed of KAT14, KAT2A, TADA2L, TADA3L, ZZ3, MBIP, WDR5, YEATS2, CCDC101 and DR1. In the complex, it probably interacts directly with KAT2A, KAT14 and WDR5. In terms of tissue distribution, ubiquitous. High expression seen in the heart and lung.

The protein localises to the nucleus. The protein resides in the cytoplasm. Its function is as follows. Inhibits the MAP3K12 activity to induce the activation of the JNK/SAPK pathway. Component of the ATAC complex, a complex with histone acetyltransferase activity on histones H3 and H4. The protein is MAP3K12-binding inhibitory protein 1 (MBIP) of Homo sapiens (Human).